The chain runs to 899 residues: Protein translocase subunit SecA (899 aa).

ATP-binding positions include Gln87, 105–109, and Asp516; that span reads GEGKT. The Zn(2+) site is built by Cys884, Cys886, Cys895, and His896.

Belongs to the SecA family. As to quaternary structure, monomer and homodimer. Part of the essential Sec protein translocation apparatus which comprises SecA, SecYEG and auxiliary proteins SecDF. Other proteins may also be involved. The cofactor is Zn(2+).

The protein resides in the cell inner membrane. Its subcellular location is the cytoplasm. The catalysed reaction is ATP + H2O + cellular proteinSide 1 = ADP + phosphate + cellular proteinSide 2.. Its function is as follows. Part of the Sec protein translocase complex. Interacts with the SecYEG preprotein conducting channel. Has a central role in coupling the hydrolysis of ATP to the transfer of proteins into and across the cell membrane, serving as an ATP-driven molecular motor driving the stepwise translocation of polypeptide chains across the membrane. In Borreliella afzelii (strain PKo) (Borrelia afzelii), this protein is Protein translocase subunit SecA.